The primary structure comprises 238 residues: Histone H1 (238 aa).

Composition is skewed to low complexity over residues Ala21–Pro34 and Ala123–Lys132. Disordered stretches follow at residues Ala21–Ser57 and Ala123–Lys238. In terms of domain architecture, H15 spans Ala54–Lys124. Over residues Thr133 to Ala197 the composition is skewed to basic residues. 2 stretches are compositionally biased toward low complexity: residues Lys198–Lys208 and Lys217–Lys230.

The protein belongs to the histone H1/H5 family.

It is found in the nucleus. Its subcellular location is the chromosome. Histones H1 are necessary for the condensation of nucleosome chains into higher-order structures. The polypeptide is Histone H1 (Triticum aestivum (Wheat)).